Here is a 253-residue protein sequence, read N- to C-terminus: L-cysteine S-thiosulfotransferase subunit SoxA (253 aa).

A signal peptide spans Met1 to Ala17. The region spanning Val44 to Ser129 is the Cytochrome c domain. Heme c contacts are provided by Cys64, Cys67, His68, Cys102, Cys165, Cys168, and His169. Residue Arg210 participates in substrate binding. Position 214 (Cys214) interacts with heme c. Catalysis depends on Cys214, which acts as the Cysteine persulfide intermediate.

Belongs to the SoxA family. In terms of assembly, heterodimer of SoxA and SoxX. Requires heme c as cofactor. Cysteine persulfide at Cys-214.

It localises to the periplasm. The catalysed reaction is L-cysteinyl-[SoxY protein] + thiosulfate + 2 Fe(III)-[cytochrome c] = S-sulfosulfanyl-L-cysteinyl-[SoxY protein] + 2 Fe(II)-[cytochrome c] + 2 H(+). It carries out the reaction S-sulfanyl-L-cysteinyl-[SoxY protein] + thiosulfate + 2 Fe(III)-[cytochrome c] = S-(2-sulfodisulfanyl)-L-cysteinyl-[SoxY protein] + 2 Fe(II)-[cytochrome c] + 2 H(+). Functionally, C-type diheme cytochrome, which is part of the SoxAX cytochrome complex involved in sulfur oxidation. The SoxAX complex catalyzes the formation of a heterodisulfide bond between the conserved cysteine residue on a sulfur carrier SoxYZ complex subunit SoxY and thiosulfate or other inorganic sulfur substrates. This leads to the liberation of two electrons, which may be transferred from the SoxAX complex to another cytochrome c that then channels them into the respiratory electron transport chain. Some electrons may be used for reductive CO(2) fixation. The polypeptide is L-cysteine S-thiosulfotransferase subunit SoxA (Hydrogenobacter thermophilus (strain DSM 6534 / IAM 12695 / TK-6)).